The primary structure comprises 238 residues: ATP synthase subunit O, mitochondrial (238 aa).

Residues 1-36 (MANRFRSGISFFKTIAVTDSVSSVRSKSLFPALRTY) constitute a mitochondrion transit peptide. A Phosphothreonine modification is found at Thr-90.

The protein belongs to the ATPase delta chain family. As to quaternary structure, F-type ATPases have 2 components, CF(1) - the catalytic core - and CF(0) - the membrane proton channel. CF(1) has five subunits: alpha(3), beta(3), gamma(1), delta(1), epsilon(1). CF(0) has three main subunits: a, b and c.

The protein localises to the mitochondrion. It is found in the mitochondrion inner membrane. Functionally, mitochondrial membrane ATP synthase (F(1)F(0) ATP synthase or Complex V) produces ATP from ADP in the presence of a proton gradient across the membrane which is generated by electron transport complexes of the respiratory chain. F-type ATPases consist of two structural domains, F(1) - containing the extramembraneous catalytic core and F(0) - containing the membrane proton channel, linked together by a central stalk and a peripheral stalk. During catalysis, ATP synthesis in the catalytic domain of F(1) is coupled via a rotary mechanism of the central stalk subunits to proton translocation. Part of the complex F(0) domain and the peripheric stalk, which acts as a stator to hold the catalytic alpha(3)beta(3) subcomplex and subunit a/ATP6 static relative to the rotary elements. This is ATP synthase subunit O, mitochondrial from Arabidopsis thaliana (Mouse-ear cress).